The following is a 286-amino-acid chain: Pyridoxal kinase PdxY (286 aa).

Substrate contacts are provided by residues S9 and 44-45 (TQ). ATP contacts are provided by residues D111, A143, E148, K181, and 208–211 (RPLV). D223 is a substrate binding site.

The protein belongs to the pyridoxine kinase family. PdxY subfamily. As to quaternary structure, homodimer. Requires Mg(2+) as cofactor.

It carries out the reaction pyridoxal + ATP = pyridoxal 5'-phosphate + ADP + H(+). The protein operates within cofactor metabolism; pyridoxal 5'-phosphate salvage; pyridoxal 5'-phosphate from pyridoxal: step 1/1. Functionally, pyridoxal kinase involved in the salvage pathway of pyridoxal 5'-phosphate (PLP). Catalyzes the phosphorylation of pyridoxal to PLP. The sequence is that of Pyridoxal kinase PdxY from Yersinia pseudotuberculosis serotype I (strain IP32953).